We begin with the raw amino-acid sequence, 334 residues long: Glycerol-3-phosphate dehydrogenase [NAD(P)+] 2 (334 aa).

NADPH is bound by residues Trp16, Arg36, Arg37, and Lys110. Lys110 and Gly140 together coordinate sn-glycerol 3-phosphate. NADPH is bound at residue Ala144. The sn-glycerol 3-phosphate site is built by Lys195, Asp248, Ser258, Arg259, and Asn260. The active-site Proton acceptor is the Lys195. An NADPH-binding site is contributed by Arg259. Positions 282 and 284 each coordinate NADPH.

The protein belongs to the NAD-dependent glycerol-3-phosphate dehydrogenase family.

The protein resides in the cytoplasm. It carries out the reaction sn-glycerol 3-phosphate + NAD(+) = dihydroxyacetone phosphate + NADH + H(+). The enzyme catalyses sn-glycerol 3-phosphate + NADP(+) = dihydroxyacetone phosphate + NADPH + H(+). It functions in the pathway membrane lipid metabolism; glycerophospholipid metabolism. Its function is as follows. Catalyzes the reduction of the glycolytic intermediate dihydroxyacetone phosphate (DHAP) to sn-glycerol 3-phosphate (G3P), the key precursor for phospholipid synthesis. This is Glycerol-3-phosphate dehydrogenase [NAD(P)+] 2 from Mycobacterium tuberculosis (strain ATCC 25618 / H37Rv).